A 98-amino-acid polypeptide reads, in one-letter code: A-type ATP synthase subunit F (98 aa).

It belongs to the V-ATPase F subunit family. As to quaternary structure, the A-type ATPase is composed of subunits A(3), B(3), C, D, E(1 or 2), F, H(2), I and K(x).

It is found in the cell membrane. In terms of biological role, component of the A-type ATP synthase that produces ATP from ADP in the presence of a proton gradient across the membrane. This chain is A-type ATP synthase subunit F, found in Methanocaldococcus jannaschii (strain ATCC 43067 / DSM 2661 / JAL-1 / JCM 10045 / NBRC 100440) (Methanococcus jannaschii).